The chain runs to 1630 residues: Patronin (1630 aa).

The Calponin-homology (CH) domain occupies 156-288 (QSYEQALLGW…LVVLLTDLFN (133 aa)). Disordered regions lie at residues 311-333 (NSFG…VQSN) and 355-446 (ASMH…DQLN). Over residues 319–333 (RRSTPPNEYQTVQSN) the composition is skewed to polar residues. Phosphothreonine is present on T322. Positions 358–394 (HSQQQQQLHQQQQHQQQYHQQPLQQHPSQSQLQIQQQ) are enriched in low complexity. The span at 404–419 (QAKEKTNVESKADERG) shows a compositional bias: basic and acidic residues. Phosphoserine is present on residues S422, S431, S441, S460, S463, and S466. A compositionally biased stretch (polar residues) spans 432-446 (QLTIENFGGSQDQLN). The interval 486 to 589 (LQLGYDTDSG…SMPASPAAWQ (104 aa)) is disordered. At T492 the chain carries Phosphothreonine. 4 positions are modified to phosphoserine: S494, S496, S513, and S530. Basic and acidic residues predominate over residues 495–507 (GSEKQDRETEKYS). Residues 513–529 (SVDNVPTVSSHNLSNAG) show a composition bias toward polar residues. Residues 576–587 (SSTSSMPASPAA) show a composition bias toward low complexity. The stretch at 601–639 (ENASKLSTIRMKLEEKRRRIEQDKRKIEMALLRHQEKED) forms a coiled coil. Disordered regions lie at residues 726-753 (VSAY…PMPM), 872-967 (QQHQ…GMPM), 1005-1042 (DFVH…YDSG), 1055-1186 (NLTY…NKYT), 1200-1241 (GAMS…NAEA), 1284-1315 (EAKA…EEQM), and 1335-1459 (EREG…GVER). Composition is skewed to low complexity over residues 738-750 (PYQQ…QQQP) and 872-896 (QQHQ…SPGS). Over residues 902–914 (NGGGGGGGGGGGE) the composition is skewed to gly residues. Over residues 919-947 (FQVQASPQHGQRQVSGSNGVQRQQSLTNL) the composition is skewed to polar residues. Low complexity-rich tracts occupy residues 956–967 (PQNMGMPMGMPM) and 1008–1036 (HQQQ…GSSS). 4 positions are modified to phosphoserine: S1034, S1035, S1036, and S1067. Residues 1065-1074 (RPSIQANSFQ) show a composition bias toward polar residues. Basic residues predominate over residues 1105–1116 (RPKPPLRAKRSP). A compositionally biased stretch (polar residues) spans 1167–1184 (GLNNSNSVKSPGNATYNK). Low complexity predominate over residues 1218 to 1230 (QSPQQTQQPMSPT). Phosphoserine is present on residues S1219 and S1228. A coiled-coil region spans residues 1277 to 1343 (QRRQQQEEAK…AEREGKTLDR (67 aa)). A compositionally biased stretch (basic and acidic residues) spans 1335–1348 (EREGKTLDRPDLHV). A compositionally biased stretch (basic residues) spans 1363–1374 (RQQRTTRPRPKT). Positions 1382-1400 (VDISEASSISSRGKKGSSS) are enriched in low complexity. 3 positions are modified to phosphoserine: S1398, S1399, and S1400. Residues 1401-1412 (NLTGYGQLSSNS) are compositionally biased toward polar residues. Residues 1450 to 1459 (TSREPAGVER) show a composition bias toward basic and acidic residues. One can recognise a CKK domain in the interval 1489-1623 (GPKLYKQPAA…QGKRVQLPSK (135 aa)).

This sequence belongs to the CAMSAP1 family. In terms of assembly, interacts with msps. Associates with the minus end of the microtubules.

The protein localises to the cytoplasm. It is found in the cytoskeleton. It localises to the microtubule organizing center. The protein resides in the spindle pole body. Its subcellular location is the centrosome. The protein localises to the perinuclear region. Key microtubule-organizing protein that specifically binds the minus-end of microtubules and regulates their dynamics and organization. Involved in mitotic spindle assembly. Regulates microtubule (MT) severing. Antagonizes the activity of the kinesin-13 depolymerase Klp10A thereby switching off the depolymerization of the MTs at their pole-associated minus ends, which turns off poleward flux and induces anaphase B spindle elongation. Involved in asymmetric cell division of sensory organ precursor (SOP) cells by playing a role in the asymmetric localization of Sara-expressing endosomes to the pIIa daughter cell but not to the pIIb cell. Klp98A targets Sara-expressing endosomes to the central spindle which is symmetrically arranged in early cell division. During late cytokinesis, central spindle asymmetry is generated by enrichment of Patronin on the pIIb side which protects microtubules from depolymerization by Klp10A while unprotected microtubules on the pIIa side are disassembled by Klp10A, leading to the asymmetric delivery of Sara-expressing endosomes to the pIIa daughter cell. In fat body cells, part of perinuclear non-centrosomal microtubule-organizing centers (ncMTOCs) which function to accommodate the organization of microtubule (MT) networks to control nuclear positioning and dynein motor-based retrograde endosomal trafficking. Within the ncMTOC, Msp300 and shot anchors the ncMTOC at the nuclear surface and recruits the MT minus-end regulators Patronin and Nin for assembly, anchoring and/or stabilization of circumferential and radial MTs at the ncMTOCs. This protein, and perhaps Nin, recruits msps to the ncMTOC for the gamma-tubulin-independent elongation of radial MTs. The protein is Patronin (Patronin) of Drosophila melanogaster (Fruit fly).